A 63-amino-acid polypeptide reads, in one-letter code: Muscarinic toxin 2 (63 aa).

4 cysteine pairs are disulfide-bonded: Cys-3-Cys-22, Cys-17-Cys-42, Cys-44-Cys-55, and Cys-56-Cys-61.

The protein belongs to the three-finger toxin family. Short-chain subfamily. Type B muscarinic toxin sub-subfamily. Monomer. In terms of tissue distribution, expressed by the venom gland.

The protein localises to the secreted. Its function is as follows. Blocks M2 muscarinic acetylcholine receptors (CHRM2). Fully blocks the binding of N-methylscopolamine (NMS) and oxotremorine-M to M2 receptors, slightly increased NMS binding to M1 receptors. This chain is Muscarinic toxin 2, found in Dendroaspis angusticeps (Eastern green mamba).